A 408-amino-acid polypeptide reads, in one-letter code: Imidazolonepropionase (408 aa).

H73 and H75 together coordinate Fe(3+). Residues H73 and H75 each coordinate Zn(2+). The 4-imidazolone-5-propanoate site is built by R82, Y145, and H178. Y145 is an N-formimidoyl-L-glutamate binding site. H243 lines the Fe(3+) pocket. H243 is a Zn(2+) binding site. Q246 contributes to the 4-imidazolone-5-propanoate binding site. Position 318 (D318) interacts with Fe(3+). Zn(2+) is bound at residue D318. Residues N320 and G322 each contribute to the N-formimidoyl-L-glutamate site. S323 is a binding site for 4-imidazolone-5-propanoate.

This sequence belongs to the metallo-dependent hydrolases superfamily. HutI family. Zn(2+) is required as a cofactor. The cofactor is Fe(3+).

It localises to the cytoplasm. It carries out the reaction 4-imidazolone-5-propanoate + H2O = N-formimidoyl-L-glutamate. It participates in amino-acid degradation; L-histidine degradation into L-glutamate; N-formimidoyl-L-glutamate from L-histidine: step 3/3. In terms of biological role, catalyzes the hydrolytic cleavage of the carbon-nitrogen bond in imidazolone-5-propanoate to yield N-formimidoyl-L-glutamate. It is the third step in the universal histidine degradation pathway. The protein is Imidazolonepropionase of Shewanella baltica (strain OS185).